The chain runs to 643 residues: Melanoma-associated antigen C3 (643 aa).

MAGE domains are found at residues 184–384 (LDEK…AAGM) and 456–643 (LDEK…FCPE). The interval 347–421 (NPQGLAGHRQ…PQSPLDSCSS (75 aa)) is disordered. Residues 354-363 (HRQEDGRRGL) are compositionally biased toward basic and acidic residues. Over residues 383-414 (GMPPLPQSPPEIPPQGPPKISPQGPPQSPPQS) the composition is skewed to pro residues. Phosphothreonine occurs at positions 478, 484, and 485.

In terms of tissue distribution, expressed in testis. Not expressed in other normal tissues, but is expressed in tumors of different histological origins.

This chain is Melanoma-associated antigen C3 (MAGEC3), found in Homo sapiens (Human).